Reading from the N-terminus, the 174-residue chain is Large ribosomal subunit protein uL18 (174 aa).

Belongs to the universal ribosomal protein uL18 family. Part of the 50S ribosomal subunit. Contacts the 5S and 23S rRNAs.

Functionally, this is one of the proteins that bind and probably mediate the attachment of the 5S RNA into the large ribosomal subunit, where it forms part of the central protuberance. This Methanosarcina barkeri (strain Fusaro / DSM 804) protein is Large ribosomal subunit protein uL18.